The sequence spans 469 residues: UDP-N-acetylmuramate--L-alanine ligase (469 aa).

Glycine 122–threonine 128 contacts ATP.

It belongs to the MurCDEF family.

The protein localises to the cytoplasm. It catalyses the reaction UDP-N-acetyl-alpha-D-muramate + L-alanine + ATP = UDP-N-acetyl-alpha-D-muramoyl-L-alanine + ADP + phosphate + H(+). It participates in cell wall biogenesis; peptidoglycan biosynthesis. In terms of biological role, cell wall formation. In Legionella pneumophila (strain Lens), this protein is UDP-N-acetylmuramate--L-alanine ligase.